Consider the following 569-residue polypeptide: Laccase-13 (569 aa).

An N-terminal signal peptide occupies residues 1 to 21 (MEQLRPFFLLLAIFVASLVNA). 2 Plastocyanin-like domains span residues 29–145 (VIQE…PPLS) and 157–308 (REIT…YKDA). Asparagine 75 is a glycosylation site (N-linked (GlcNAc...) asparagine). Histidine 79, histidine 81, histidine 124, and histidine 126 together coordinate Cu cation. N-linked (GlcNAc...) asparagine glycosylation is found at asparagine 186, asparagine 296, asparagine 330, asparagine 381, asparagine 391, and asparagine 432. The 136-residue stretch at 418-553 (DFPPTPPVTF…AMVFLVENGE (136 aa)) folds into the Plastocyanin-like 3 domain. The Cu cation site is built by histidine 470, histidine 473, histidine 475, histidine 532, cysteine 533, histidine 534, and histidine 538.

Belongs to the multicopper oxidase family. Cu cation is required as a cofactor. Mostly expressed in roots. Also detected in leaves, stems and flowers but not in siliques.

It is found in the secreted. Its subcellular location is the extracellular space. The protein localises to the apoplast. The catalysed reaction is 4 hydroquinone + O2 = 4 benzosemiquinone + 2 H2O. Lignin degradation and detoxification of lignin-derived products. The protein is Laccase-13 (LAC13) of Arabidopsis thaliana (Mouse-ear cress).